We begin with the raw amino-acid sequence, 235 residues long: Ribosome maturation factor RimM (235 aa).

The span at 1–19 shows a compositional bias: basic and acidic residues; sequence MKHEEANKEIGGRGAEGQR. The interval 1-49 is disordered; it reads MKHEEANKEIGGRGAEGQRSKRVGGNSKIQNIQSPAPNPQPIVPNTQSP. Positions 150–230 constitute a PRC barrel domain; sequence EDEYHVLDLI…RIEITPPPGL (81 aa).

It belongs to the RimM family. In terms of assembly, binds ribosomal protein uS19.

It localises to the cytoplasm. Its function is as follows. An accessory protein needed during the final step in the assembly of 30S ribosomal subunit, possibly for assembly of the head region. Essential for efficient processing of 16S rRNA. May be needed both before and after RbfA during the maturation of 16S rRNA. It has affinity for free ribosomal 30S subunits but not for 70S ribosomes. This is Ribosome maturation factor RimM from Nostoc punctiforme (strain ATCC 29133 / PCC 73102).